A 354-amino-acid polypeptide reads, in one-letter code: Fe(3+) ions import ATP-binding protein FbpC (354 aa).

Residues 4–236 (LELHAVHKSF…PRDAQTALFL (233 aa)) enclose the ABC transporter domain. 36-43 (GPSGSGKT) contributes to the ATP binding site.

The protein belongs to the ABC transporter superfamily. Fe(3+) ion importer (TC 3.A.1.10) family. In terms of assembly, the complex is composed of two ATP-binding proteins (FbpC), two transmembrane proteins (FbpB) and a solute-binding protein (FbpA).

The protein localises to the cell inner membrane. It carries out the reaction Fe(3+)(out) + ATP + H2O = Fe(3+)(in) + ADP + phosphate + H(+). Functionally, part of the ABC transporter complex FbpABC involved in Fe(3+) ions import. Responsible for energy coupling to the transport system. The polypeptide is Fe(3+) ions import ATP-binding protein FbpC (Pseudomonas fluorescens (strain ATCC BAA-477 / NRRL B-23932 / Pf-5)).